A 413-amino-acid polypeptide reads, in one-letter code: Amino acid transporter AVT3B (413 aa).

At 1–27 (MGLEEQGRAREDTPLLGKGRPLSSKFK) the chain is on the cytoplasmic side. The helical transmembrane segment at 28–48 (TFANVFIAIVGAGVLGLPYAF) threads the bilayer. Residues 49–54 (KRTGWL) lie on the Vacuolar side of the membrane. The chain crosses the membrane as a helical span at residues 55-75 (MGLLTLFSVAALINHCMMLLV). Residues 76–103 (HIRRKLGVSNIGSFGDLGFAACGNLGRF) are Cytoplasmic-facing. Residues 104–124 (VVDILIILSQAGFCVGYLIFI) traverse the membrane as a helical segment. The Vacuolar segment spans residues 125–145 (GNTLANLSKPTKSTTLMSLRH). Residues 146-166 (LMGVSPKSLYIWGCFPFQLGL) traverse the membrane as a helical segment. The Cytoplasmic portion of the chain corresponds to 167–174 (NSIKTLTH). Residues 175 to 195 (LAPLSIFADVVDLGAMAVVIV) traverse the membrane as a helical segment. The Vacuolar segment spans residues 196–207 (EDIKITVVQRPQ). Residues 208–228 (VVAFGGMSVFFYGMGVAVYAF) traverse the membrane as a helical segment. Residues 229 to 249 (EGVGMVLPLESETKDKDKFGK) are Cytoplasmic-facing. A helical transmembrane segment spans residues 250-270 (VLALSMLFIAVMYGSFGVLGY). The Vacuolar segment spans residues 271–288 (MAFGDDTMDIITANLGAG). A helical membrane pass occupies residues 289-309 (VVSSLVQLGLCINLFFTFPLM). Residues 310 to 331 (MNPVFEIVERRFWSGMYCVWLR) are Cytoplasmic-facing. Residues 332–352 (WLLVLAVTLVALLVPNFADFL) traverse the membrane as a helical segment. The Vacuolar segment spans residues 353-355 (SLV). The helical transmembrane segment at 356–376 (GSSVCCALGFVLPSLFHLMVF) threads the bilayer. Topologically, residues 377–390 (KDEMEWKQRALDVG) are cytoplasmic. Residues 391-411 (ILLLGVILGVSGTWSSLTEIF) traverse the membrane as a helical segment. Topologically, residues 412–413 (QE) are vacuolar.

The protein belongs to the amino acid/polyamine transporter 2 family. Amino acid/auxin permease (AAAP) (TC 2.A.18.8) subfamily. In terms of tissue distribution, ubiquitous.

Its subcellular location is the vacuole membrane. In terms of biological role, translocates preferentially neutral amino acids from the vacuole to the cytoplasm. The sequence is that of Amino acid transporter AVT3B from Arabidopsis thaliana (Mouse-ear cress).